A 262-amino-acid polypeptide reads, in one-letter code: Acyl-[acyl-carrier-protein]--UDP-N-acetylglucosamine O-acyltransferase (262 aa).

The protein belongs to the transferase hexapeptide repeat family. LpxA subfamily. Homotrimer.

The protein resides in the cytoplasm. It carries out the reaction a (3R)-hydroxyacyl-[ACP] + UDP-N-acetyl-alpha-D-glucosamine = a UDP-3-O-[(3R)-3-hydroxyacyl]-N-acetyl-alpha-D-glucosamine + holo-[ACP]. It functions in the pathway glycolipid biosynthesis; lipid IV(A) biosynthesis; lipid IV(A) from (3R)-3-hydroxytetradecanoyl-[acyl-carrier-protein] and UDP-N-acetyl-alpha-D-glucosamine: step 1/6. In terms of biological role, involved in the biosynthesis of lipid A, a phosphorylated glycolipid that anchors the lipopolysaccharide to the outer membrane of the cell. The chain is Acyl-[acyl-carrier-protein]--UDP-N-acetylglucosamine O-acyltransferase from Yersinia pseudotuberculosis serotype O:1b (strain IP 31758).